A 216-amino-acid polypeptide reads, in one-letter code: Nucleoid occlusion factor SlmA (216 aa).

Residues 1 to 23 (MAEQLTLDSIEPEPEKQSAKIEK) form a disordered region. The span at 13–23 (EPEKQSAKIEK) shows a compositional bias: basic and acidic residues. The 61-residue stretch at 28-88 (ERRQQVLTVL…ALIENIESSL (61 aa)) folds into the HTH tetR-type domain. The segment at residues 51–70 (TTARLAKEVGVSEAALYRYF) is a DNA-binding region (H-T-H motif).

This sequence belongs to the nucleoid occlusion factor SlmA family. Homodimer. Interacts with FtsZ.

The protein resides in the cytoplasm. The protein localises to the nucleoid. In terms of biological role, required for nucleoid occlusion (NO) phenomenon, which prevents Z-ring formation and cell division over the nucleoid. Acts as a DNA-associated cell division inhibitor that binds simultaneously chromosomal DNA and FtsZ, and disrupts the assembly of FtsZ polymers. SlmA-DNA-binding sequences (SBS) are dispersed on non-Ter regions of the chromosome, preventing FtsZ polymerization at these regions. This is Nucleoid occlusion factor SlmA from Mannheimia succiniciproducens (strain KCTC 0769BP / MBEL55E).